We begin with the raw amino-acid sequence, 360 residues long: 3-isopropylmalate dehydrogenase (360 aa).

Residue Gly76 to Glu89 participates in NAD(+) binding. Substrate-binding residues include Arg96, Arg106, Arg134, and Asp224. 3 residues coordinate Mg(2+): Asp224, Asp248, and Asp252. Gly282 to Asn294 provides a ligand contact to NAD(+).

The protein belongs to the isocitrate and isopropylmalate dehydrogenases family. LeuB type 1 subfamily. In terms of assembly, homodimer. Mg(2+) is required as a cofactor. Mn(2+) serves as cofactor.

Its subcellular location is the cytoplasm. The catalysed reaction is (2R,3S)-3-isopropylmalate + NAD(+) = 4-methyl-2-oxopentanoate + CO2 + NADH. It participates in amino-acid biosynthesis; L-leucine biosynthesis; L-leucine from 3-methyl-2-oxobutanoate: step 3/4. Functionally, catalyzes the oxidation of 3-carboxy-2-hydroxy-4-methylpentanoate (3-isopropylmalate) to 3-carboxy-4-methyl-2-oxopentanoate. The product decarboxylates to 4-methyl-2 oxopentanoate. This is 3-isopropylmalate dehydrogenase from Pseudomonas fluorescens (strain ATCC BAA-477 / NRRL B-23932 / Pf-5).